The sequence spans 98 residues: Large ribosomal subunit protein uL23 (98 aa).

Belongs to the universal ribosomal protein uL23 family. Part of the 50S ribosomal subunit. Contacts protein L29, and trigger factor when it is bound to the ribosome.

Functionally, one of the early assembly proteins it binds 23S rRNA. One of the proteins that surrounds the polypeptide exit tunnel on the outside of the ribosome. Forms the main docking site for trigger factor binding to the ribosome. In Herpetosiphon aurantiacus (strain ATCC 23779 / DSM 785 / 114-95), this protein is Large ribosomal subunit protein uL23.